The sequence spans 319 residues: Dehydrogenase/reductase SDR family member 9 (319 aa).

The N-terminal stretch at methionine 1–glycine 20 is a signal peptide. Residues isoleucine 34–alanine 58 and aspartate 83 each bind NAD(+). Serine 164 contacts substrate. Tyrosine 176 (proton acceptor) is an active-site residue. Lysine 180 contacts NAD(+).

This sequence belongs to the short-chain dehydrogenases/reductases (SDR) family. Homotetramer.

The protein localises to the microsome membrane. It localises to the endoplasmic reticulum membrane. It catalyses the reaction 3beta-hydroxy-5alpha-pregnane-20-one + NAD(+) = 5alpha-pregnane-3,20-dione + NADH + H(+). The catalysed reaction is 17beta-hydroxy-5alpha-androstan-3-one + NAD(+) = 5alpha-androstan-3,17-dione + NADH + H(+). It carries out the reaction androsterone + NAD(+) = 5alpha-androstan-3,17-dione + NADH + H(+). The enzyme catalyses 5alpha-androstane-3alpha,17beta-diol + NAD(+) = 17beta-hydroxy-5alpha-androstan-3-one + NADH + H(+). It catalyses the reaction all-trans-retinol + NAD(+) = all-trans-retinal + NADH + H(+). The catalysed reaction is 3alpha-hydroxy-5alpha-pregnan-20-one + NAD(+) = 5alpha-pregnane-3,20-dione + NADH + H(+). Its function is as follows. 3-alpha-hydroxysteroid dehydrogenase that converts 3-alpha-tetrahydroprogesterone (allopregnanolone) to dihydroxyprogesterone and 3-alpha-androstanediol to dihydroxyprogesterone. Also plays a role in the biosynthesis of retinoic acid. Can utilize both NADH and NADPH. This chain is Dehydrogenase/reductase SDR family member 9 (Dhrs9), found in Mus musculus (Mouse).